The chain runs to 244 residues: Type III pantothenate kinase (244 aa).

Residue aspartate 6–lysine 13 coordinates ATP. Substrate-binding positions include tyrosine 87 and glycine 94–arginine 97. Aspartate 96 functions as the Proton acceptor in the catalytic mechanism. Aspartate 117 provides a ligand contact to K(+). Position 120 (threonine 120) interacts with ATP. Threonine 172 is a binding site for substrate.

The protein belongs to the type III pantothenate kinase family. Homodimer. It depends on NH4(+) as a cofactor. K(+) is required as a cofactor.

It is found in the cytoplasm. The catalysed reaction is (R)-pantothenate + ATP = (R)-4'-phosphopantothenate + ADP + H(+). It participates in cofactor biosynthesis; coenzyme A biosynthesis; CoA from (R)-pantothenate: step 1/5. Functionally, catalyzes the phosphorylation of pantothenate (Pan), the first step in CoA biosynthesis. In Flavobacterium johnsoniae (strain ATCC 17061 / DSM 2064 / JCM 8514 / BCRC 14874 / CCUG 350202 / NBRC 14942 / NCIMB 11054 / UW101) (Cytophaga johnsonae), this protein is Type III pantothenate kinase.